The chain runs to 189 residues: Large ribosomal subunit protein eL18 (189 aa).

Belongs to the eukaryotic ribosomal protein eL18 family.

The protein resides in the cytoplasm. The polypeptide is Large ribosomal subunit protein eL18 (RpL18) (Drosophila pseudoobscura pseudoobscura (Fruit fly)).